The chain runs to 511 residues: 2,3-bisphosphoglycerate-independent phosphoglycerate mutase (511 aa).

A Mn(2+)-binding site is contributed by Asp12. A Phosphotyrosine modification is found at Tyr36. Ser62 contacts Mn(2+). The Phosphoserine intermediate role is filled by Ser62. Residues His123, 153–154 (RD), Arg185, Arg191, 261–264 (RPDR), and Lys336 contribute to the substrate site. Asp403, His407, Asp444, His445, and His462 together coordinate Mn(2+).

This sequence belongs to the BPG-independent phosphoglycerate mutase family. In terms of assembly, monomer. Requires Mn(2+) as cofactor.

It carries out the reaction (2R)-2-phosphoglycerate = (2R)-3-phosphoglycerate. Its pathway is carbohydrate degradation; glycolysis; pyruvate from D-glyceraldehyde 3-phosphate: step 3/5. Its function is as follows. Essential for rapid growth and for sporulation. Catalyzes the interconversion of 2-phosphoglycerate and 3-phosphoglycerate. This is 2,3-bisphosphoglycerate-independent phosphoglycerate mutase from Bacillus pumilus (strain SAFR-032).